The chain runs to 311 residues: Methionyl-tRNA formyltransferase (311 aa).

109–112 (SLLP) serves as a coordination point for (6S)-5,6,7,8-tetrahydrofolate.

It belongs to the Fmt family.

The enzyme catalyses L-methionyl-tRNA(fMet) + (6R)-10-formyltetrahydrofolate = N-formyl-L-methionyl-tRNA(fMet) + (6S)-5,6,7,8-tetrahydrofolate + H(+). In terms of biological role, attaches a formyl group to the free amino group of methionyl-tRNA(fMet). The formyl group appears to play a dual role in the initiator identity of N-formylmethionyl-tRNA by promoting its recognition by IF2 and preventing the misappropriation of this tRNA by the elongation apparatus. This chain is Methionyl-tRNA formyltransferase, found in Staphylococcus aureus (strain bovine RF122 / ET3-1).